A 317-amino-acid chain; its full sequence is Alkylsulfatase (317 aa).

Residue histidine 78 coordinates substrate. Histidine 105 and aspartate 107 together coordinate Fe cation. Valine 108 is a substrate binding site. Threonine 132 serves as a coordination point for 2-oxoglutarate. Histidine 261 provides a ligand contact to Fe cation. 2-oxoglutarate is bound by residues arginine 272 and arginine 276.

It belongs to the TfdA dioxygenase family. Homotetramer. Requires Fe(2+) as cofactor.

In terms of biological role, alpha-ketoglutarate-dependent dioxygenase that in vitro catalyzes the oxygenolytic release of sulfite from hexylsulfate. The protein is Alkylsulfatase of Acinetobacter baylyi (strain ATCC 33305 / BD413 / ADP1).